A 102-amino-acid polypeptide reads, in one-letter code: MTGSDLIGMMILAAGLFAIGLFGVLARRGILFQLVALEVALSGPALAFVAAGAYHADPQGQGMLILVLTLAAAEVAVGLALLLRIRRTAGSDDSDVISGMKG.

3 helical membrane-spanning segments follow: residues 6-26, 30-50, and 63-83; these read LIGM…GVLA, ILFQ…AFVA, and MLIL…ALLL.

Belongs to the complex I subunit 4L family. NDH-1 is composed of 14 different subunits. Subunits NuoA, H, J, K, L, M, N constitute the membrane sector of the complex.

The protein localises to the cell inner membrane. It catalyses the reaction a quinone + NADH + 5 H(+)(in) = a quinol + NAD(+) + 4 H(+)(out). In terms of biological role, NDH-1 shuttles electrons from NADH, via FMN and iron-sulfur (Fe-S) centers, to quinones in the respiratory chain. The immediate electron acceptor for the enzyme in this species is believed to be ubiquinone. Couples the redox reaction to proton translocation (for every two electrons transferred, four hydrogen ions are translocated across the cytoplasmic membrane), and thus conserves the redox energy in a proton gradient. The chain is NADH-quinone oxidoreductase subunit K from Rhodopseudomonas palustris (strain HaA2).